Consider the following 180-residue polypeptide: UPF0340 protein BLi03936/BL03990 (180 aa).

Belongs to the UPF0340 family.

In Bacillus licheniformis (strain ATCC 14580 / DSM 13 / JCM 2505 / CCUG 7422 / NBRC 12200 / NCIMB 9375 / NCTC 10341 / NRRL NRS-1264 / Gibson 46), this protein is UPF0340 protein BLi03936/BL03990.